Reading from the N-terminus, the 210-residue chain is Uracil phosphoribosyltransferase (210 aa).

Residues Arg-77, Arg-102, and 129 to 137 (DPMLATGAS) contribute to the 5-phospho-alpha-D-ribose 1-diphosphate site. Uracil is bound by residues Ile-195 and 200 to 202 (GDA). Asp-201 contacts 5-phospho-alpha-D-ribose 1-diphosphate.

The protein belongs to the UPRTase family. Mg(2+) is required as a cofactor.

It catalyses the reaction UMP + diphosphate = 5-phospho-alpha-D-ribose 1-diphosphate + uracil. Its pathway is pyrimidine metabolism; UMP biosynthesis via salvage pathway; UMP from uracil: step 1/1. Its activity is regulated as follows. Allosterically activated by GTP. Functionally, catalyzes the conversion of uracil and 5-phospho-alpha-D-ribose 1-diphosphate (PRPP) to UMP and diphosphate. This is Uracil phosphoribosyltransferase from Mycoplasmoides gallisepticum (strain R(low / passage 15 / clone 2)) (Mycoplasma gallisepticum).